A 350-amino-acid polypeptide reads, in one-letter code: Hydroxymethylglutaryl-CoA synthase (350 aa).

The active-site Proton donor/acceptor is Glu83. The Acyl-thioester intermediate role is filled by Cys115. (3S)-3-hydroxy-3-methylglutaryl-CoA-binding residues include Cys115 and Thr156. Arg204 contributes to the CoA binding site. Residues Thr206 and His239 each coordinate (3S)-3-hydroxy-3-methylglutaryl-CoA. The active-site Proton donor/acceptor is His239. Residue Lys244 coordinates CoA. (3S)-3-hydroxy-3-methylglutaryl-CoA contacts are provided by Asn271 and Ser301.

This sequence belongs to the thiolase-like superfamily. Archaeal HMG-CoA synthase family. In terms of assembly, interacts with acetoacetyl-CoA thiolase that catalyzes the precedent step in the pathway and with a DUF35 protein. The acetoacetyl-CoA thiolase/HMG-CoA synthase complex channels the intermediate via a fused CoA-binding site, which allows for efficient coupling of the endergonic thiolase reaction with the exergonic HMGCS reaction.

It carries out the reaction acetoacetyl-CoA + acetyl-CoA + H2O = (3S)-3-hydroxy-3-methylglutaryl-CoA + CoA + H(+). The protein operates within metabolic intermediate biosynthesis; (R)-mevalonate biosynthesis; (R)-mevalonate from acetyl-CoA: step 2/3. Its function is as follows. Catalyzes the condensation of acetyl-CoA with acetoacetyl-CoA to form 3-hydroxy-3-methylglutaryl-CoA (HMG-CoA). Functions in the mevalonate (MVA) pathway leading to isopentenyl diphosphate (IPP), a key precursor for the biosynthesis of isoprenoid compounds that are building blocks of archaeal membrane lipids. The protein is Hydroxymethylglutaryl-CoA synthase of Thermococcus gammatolerans (strain DSM 15229 / JCM 11827 / EJ3).